The following is a 171-amino-acid chain: Der GTPase-activating protein YihI (171 aa).

Disordered stretches follow at residues Met-1 to Leu-99 and Leu-145 to Asn-171. Residues Thr-20 to Asp-30 are compositionally biased toward basic and acidic residues. Positions Arg-31 to His-40 are enriched in basic residues. Residues Tyr-147–Gln-160 are compositionally biased toward acidic residues.

The protein belongs to the YihI family. In terms of assembly, interacts with Der.

Its function is as follows. A GTPase-activating protein (GAP) that modifies Der/EngA GTPase function. May play a role in ribosome biogenesis. This is Der GTPase-activating protein YihI from Salmonella choleraesuis (strain SC-B67).